A 215-amino-acid chain; its full sequence is Mite allergen Der p 7 (215 aa).

The first 17 residues, Met1–Ala17, serve as a signal peptide directing secretion. Asn151 is a glycosylation site (N-linked (GlcNAc...) asparagine).

The protein belongs to the mite group 7 allergen family.

It is found in the secreted. The protein is Mite allergen Der p 7 (DERP7) of Dermatophagoides pteronyssinus (European house dust mite).